Consider the following 536-residue polypeptide: Glutamyl-tRNA(Gln) amidotransferase subunit B, mitochondrial (536 aa).

It belongs to the GatB/GatE family. GatB subfamily. As to quaternary structure, subunit of the heterotrimeric GatFAB amidotransferase (AdT) complex, composed of A, B and F subunits.

It is found in the mitochondrion. It carries out the reaction L-glutamyl-tRNA(Gln) + L-glutamine + ATP + H2O = L-glutaminyl-tRNA(Gln) + L-glutamate + ADP + phosphate + H(+). Its function is as follows. Allows the formation of correctly charged Gln-tRNA(Gln) through the transamidation of misacylated Glu-tRNA(Gln) in the mitochondria. The reaction takes place in the presence of glutamine and ATP through an activated gamma-phospho-Glu-tRNA(Gln). The chain is Glutamyl-tRNA(Gln) amidotransferase subunit B, mitochondrial from Vanderwaltozyma polyspora (strain ATCC 22028 / DSM 70294 / BCRC 21397 / CBS 2163 / NBRC 10782 / NRRL Y-8283 / UCD 57-17) (Kluyveromyces polysporus).